The following is a 540-amino-acid chain: 2,3-bisphosphoglycerate-independent phosphoglycerate mutase (540 aa).

2 residues coordinate Mn(2+): aspartate 13 and serine 63. Serine 63 functions as the Phosphoserine intermediate in the catalytic mechanism. Residues histidine 124, 154-155 (RD), arginine 186, arginine 192, 262-265 (RPDR), and lysine 356 contribute to the substrate site. Aspartate 423, histidine 427, aspartate 464, histidine 465, and histidine 483 together coordinate Mn(2+).

It belongs to the BPG-independent phosphoglycerate mutase family. As to quaternary structure, monomer. Mn(2+) serves as cofactor.

The enzyme catalyses (2R)-2-phosphoglycerate = (2R)-3-phosphoglycerate. It functions in the pathway carbohydrate degradation; glycolysis; pyruvate from D-glyceraldehyde 3-phosphate: step 3/5. Functionally, catalyzes the interconversion of 2-phosphoglycerate and 3-phosphoglycerate. The protein is 2,3-bisphosphoglycerate-independent phosphoglycerate mutase of Chloroflexus aggregans (strain MD-66 / DSM 9485).